We begin with the raw amino-acid sequence, 254 residues long: 3-deoxy-manno-octulosonate cytidylyltransferase (254 aa).

It belongs to the KdsB family.

It is found in the cytoplasm. It carries out the reaction 3-deoxy-alpha-D-manno-oct-2-ulosonate + CTP = CMP-3-deoxy-beta-D-manno-octulosonate + diphosphate. Its pathway is nucleotide-sugar biosynthesis; CMP-3-deoxy-D-manno-octulosonate biosynthesis; CMP-3-deoxy-D-manno-octulosonate from 3-deoxy-D-manno-octulosonate and CTP: step 1/1. It participates in bacterial outer membrane biogenesis; lipopolysaccharide biosynthesis. In terms of biological role, activates KDO (a required 8-carbon sugar) for incorporation into bacterial lipopolysaccharide in Gram-negative bacteria. In Pseudomonas syringae pv. syringae (strain B728a), this protein is 3-deoxy-manno-octulosonate cytidylyltransferase.